Consider the following 158-residue polypeptide: Transcriptional repressor NrdR (158 aa).

A disordered region spans residues Met1–Glu20. Residues Cys3–Cys34 fold into a zinc finger. Over residues Thr11–Glu20 the composition is skewed to basic and acidic residues. One can recognise an ATP-cone domain in the interval Leu49 to Asp139.

This sequence belongs to the NrdR family. Requires Zn(2+) as cofactor.

Functionally, negatively regulates transcription of bacterial ribonucleotide reductase nrd genes and operons by binding to NrdR-boxes. The polypeptide is Transcriptional repressor NrdR (Brucella anthropi (strain ATCC 49188 / DSM 6882 / CCUG 24695 / JCM 21032 / LMG 3331 / NBRC 15819 / NCTC 12168 / Alc 37) (Ochrobactrum anthropi)).